Here is a 126-residue protein sequence, read N- to C-terminus: Fluoride-specific ion channel FluC (126 aa).

4 helical membrane passes run 5–25, 35–55, 68–88, and 99–119; these read VLAV…LGLW, WGTL…MAFF, FAVT…LEMF, and ALVG…LGFL. Positions 75 and 78 each coordinate Na(+).

The protein belongs to the fluoride channel Fluc/FEX (TC 1.A.43) family.

The protein resides in the cell inner membrane. It carries out the reaction fluoride(in) = fluoride(out). Na(+) is not transported, but it plays an essential structural role and its presence is essential for fluoride channel function. In terms of biological role, fluoride-specific ion channel. Important for reducing fluoride concentration in the cell, thus reducing its toxicity. The sequence is that of Fluoride-specific ion channel FluC from Marinobacter nauticus (strain ATCC 700491 / DSM 11845 / VT8) (Marinobacter aquaeolei).